Reading from the N-terminus, the 432-residue chain is Glutamate-1-semialdehyde 2,1-aminomutase (432 aa).

N6-(pyridoxal phosphate)lysine is present on Lys-272.

Belongs to the class-III pyridoxal-phosphate-dependent aminotransferase family. HemL subfamily. In terms of assembly, homodimer. It depends on pyridoxal 5'-phosphate as a cofactor.

It localises to the cytoplasm. It catalyses the reaction (S)-4-amino-5-oxopentanoate = 5-aminolevulinate. The protein operates within porphyrin-containing compound metabolism; protoporphyrin-IX biosynthesis; 5-aminolevulinate from L-glutamyl-tRNA(Glu): step 2/2. It functions in the pathway porphyrin-containing compound metabolism; chlorophyll biosynthesis. The sequence is that of Glutamate-1-semialdehyde 2,1-aminomutase from Picosynechococcus sp. (strain ATCC 27264 / PCC 7002 / PR-6) (Agmenellum quadruplicatum).